The following is a 112-amino-acid chain: Secretoglobin family 2B member 24 (112 aa).

Positions 1–23 (MKGTLLLLALLMIGELGFHTTEA) are cleaved as a signal peptide.

The protein belongs to the secretoglobin family. As to expression, expressed in lacrimal gland, at higher level in males than females.

It localises to the secreted. This chain is Secretoglobin family 2B member 24 (Scgb2b24), found in Mus musculus (Mouse).